The sequence spans 473 residues: Adenosylhomocysteinase (473 aa).

Thr64, Asp139, and Glu199 together coordinate substrate. 200 to 202 (TTT) provides a ligand contact to NAD(+). The substrate site is built by Lys229 and Asp233. Residues Asn234, 263–268 (GYGDVG), Glu286, Asn321, 342–344 (IGH), and Asn387 each bind NAD(+).

Belongs to the adenosylhomocysteinase family. The cofactor is NAD(+).

The protein localises to the cytoplasm. It catalyses the reaction S-adenosyl-L-homocysteine + H2O = L-homocysteine + adenosine. It functions in the pathway amino-acid biosynthesis; L-homocysteine biosynthesis; L-homocysteine from S-adenosyl-L-homocysteine: step 1/1. In terms of biological role, may play a key role in the regulation of the intracellular concentration of adenosylhomocysteine. In Burkholderia thailandensis (strain ATCC 700388 / DSM 13276 / CCUG 48851 / CIP 106301 / E264), this protein is Adenosylhomocysteinase.